Reading from the N-terminus, the 156-residue chain is MTTKKQPDSTIALNRKAGFDYFIEDQYEAGLVLEGWEVKSLRAGKINLSDSHVIIKYGEAFLLGAQIQPLPTASTHFIPDPVRTRKLLMNKKELNHLIGSVERQGYTIVPLSLYWKKNKIKIKIALAKGKKEHDKRDTIKDREWQRDRSRIMKKNT.

The span at 135–150 (KRDTIKDREWQRDRSR) shows a compositional bias: basic and acidic residues. A disordered region spans residues 135 to 156 (KRDTIKDREWQRDRSRIMKKNT).

It belongs to the SmpB family.

The protein resides in the cytoplasm. Required for rescue of stalled ribosomes mediated by trans-translation. Binds to transfer-messenger RNA (tmRNA), required for stable association of tmRNA with ribosomes. tmRNA and SmpB together mimic tRNA shape, replacing the anticodon stem-loop with SmpB. tmRNA is encoded by the ssrA gene; the 2 termini fold to resemble tRNA(Ala) and it encodes a 'tag peptide', a short internal open reading frame. During trans-translation Ala-aminoacylated tmRNA acts like a tRNA, entering the A-site of stalled ribosomes, displacing the stalled mRNA. The ribosome then switches to translate the ORF on the tmRNA; the nascent peptide is terminated with the 'tag peptide' encoded by the tmRNA and targeted for degradation. The ribosome is freed to recommence translation, which seems to be the essential function of trans-translation. The chain is SsrA-binding protein from Legionella pneumophila (strain Paris).